We begin with the raw amino-acid sequence, 296 residues long: Ribosomal RNA small subunit methyltransferase H (296 aa).

S-adenosyl-L-methionine contacts are provided by residues 30 to 32 (GGH), Asp49, Phe76, Asp97, and Gln104.

The protein belongs to the methyltransferase superfamily. RsmH family.

The protein resides in the cytoplasm. The enzyme catalyses cytidine(1402) in 16S rRNA + S-adenosyl-L-methionine = N(4)-methylcytidine(1402) in 16S rRNA + S-adenosyl-L-homocysteine + H(+). Its function is as follows. Specifically methylates the N4 position of cytidine in position 1402 (C1402) of 16S rRNA. The sequence is that of Ribosomal RNA small subunit methyltransferase H from Mesomycoplasma hyopneumoniae (strain 7448) (Mycoplasma hyopneumoniae).